The sequence spans 331 residues: Protein C10 (331 aa).

This sequence belongs to the poxviridae C4/C10 protein family.

This Vaccinia virus (strain Copenhagen) (VACV) protein is Protein C10.